Consider the following 1172-residue polypeptide: DNA-directed RNA polymerase subunit beta (1172 aa).

Belongs to the RNA polymerase beta chain family. The RNAP catalytic core consists of 2 alpha, 1 beta, 1 beta' and 1 omega subunit. When a sigma factor is associated with the core the holoenzyme is formed, which can initiate transcription.

It catalyses the reaction RNA(n) + a ribonucleoside 5'-triphosphate = RNA(n+1) + diphosphate. Its function is as follows. DNA-dependent RNA polymerase catalyzes the transcription of DNA into RNA using the four ribonucleoside triphosphates as substrates. The polypeptide is DNA-directed RNA polymerase subunit beta (Pseudothermotoga lettingae (strain ATCC BAA-301 / DSM 14385 / NBRC 107922 / TMO) (Thermotoga lettingae)).